Here is a 213-residue protein sequence, read N- to C-terminus: Charged multivesicular body protein 2b (213 aa).

Ala-2 carries the post-translational modification N-acetylalanine. A coiled-coil region spans residues 25–55 (QRAIIRDRAALEKQEKQLELEIKKMAKIGNK). A compositionally biased stretch (low complexity) spans 179–194 (AKAPSAARSLPSASTS). The tract at residues 179–199 (AKAPSAARSLPSASTSKATIS) is disordered. Residue Ser-199 is modified to Phosphoserine. The MIT-interacting motif motif lies at 201–211 (EEIERQLKALG).

Belongs to the SNF7 family. As to quaternary structure, probable core component of the endosomal sorting required for transport complex III (ESCRT-III). ESCRT-III components are thought to multimerize to form a flat lattice on the perimeter membrane of the endosome. Several assembly forms of ESCRT-III may exist that interact and act sequentially. Interacts with CHMP2A. Interacts with VPS4A. Interacts with VPS4B; the interaction is direct. As to expression, in brain, it is expressed in all neuronal populations with a relatively enhanced expression in the hippocampus, frontal and temporal lobes and in both granule and Purkinje cells of the cerebellum. Not expressed in astrocytes or oligodendrocytes.

The protein resides in the cytoplasm. It is found in the cytosol. Its subcellular location is the late endosome membrane. In terms of biological role, probable core component of the endosomal sorting required for transport complex III (ESCRT-III) which is involved in multivesicular bodies (MVBs) formation and sorting of endosomal cargo proteins into MVBs. MVBs contain intraluminal vesicles (ILVs) that are generated by invagination and scission from the limiting membrane of the endosome and mostly are delivered to lysosomes enabling degradation of membrane proteins, such as stimulated growth factor receptors, lysosomal enzymes and lipids. The MVB pathway appears to require the sequential function of ESCRT-O, -I,-II and -III complexes. ESCRT-III proteins mostly dissociate from the invaginating membrane before the ILV is released. The ESCRT machinery also functions in topologically equivalent membrane fission events, such as the terminal stages of cytokinesis. ESCRT-III proteins are believed to mediate the necessary vesicle extrusion and/or membrane fission activities, possibly in conjunction with the AAA ATPase VPS4. This chain is Charged multivesicular body protein 2b (Chmp2b), found in Mus musculus (Mouse).